Reading from the N-terminus, the 282-residue chain is Large ribosomal subunit protein uL2 (282 aa).

The tract at residues 223 to 282 (TVRGSVMNPNDHPHGGGEGRAPIGRKSPVTPWGKKALGVKTRNTKKTSEKLIVRKRSNKK) is disordered.

This sequence belongs to the universal ribosomal protein uL2 family. Part of the 50S ribosomal subunit. Forms a bridge to the 30S subunit in the 70S ribosome.

In terms of biological role, one of the primary rRNA binding proteins. Required for association of the 30S and 50S subunits to form the 70S ribosome, for tRNA binding and peptide bond formation. It has been suggested to have peptidyltransferase activity; this is somewhat controversial. Makes several contacts with the 16S rRNA in the 70S ribosome. This is Large ribosomal subunit protein uL2 from Mycoplasma mycoides subsp. mycoides SC (strain CCUG 32753 / NCTC 10114 / PG1).